The sequence spans 539 residues: Dihydrolipoyllysine-residue acetyltransferase component 2 of pyruvate dehydrogenase complex, mitochondrial (539 aa).

A mitochondrion-targeting transit peptide spans 1 to 102; that stretch reads MASRIINHSK…SSQMRSVRGF (102 aa). Residues 102–122 form a disordered region; the sequence is FSSSSDLPPHQEIGMPSLSPT. The Lipoyl-binding domain occupies 111-187; it reads HQEIGMPSLS…QVGEVIAITV (77 aa). Residue Lys-152 is modified to N6-lipoyllysine. Positions 196-244 are disordered; it reads FKDYTPSSDTGPAAPEAKPAPSLPKEEKVEKPASAPEAKISKPSSAPSE. A Peripheral subunit-binding (PSBD) domain is found at 248–285; the sequence is FASPLARKLAEDNNVPLSSIKGTGPEGRIVKADVEDFL. Residues His-512 and Asp-516 contribute to the active site.

It belongs to the 2-oxoacid dehydrogenase family. It depends on (R)-lipoate as a cofactor.

The protein resides in the mitochondrion matrix. The catalysed reaction is N(6)-[(R)-dihydrolipoyl]-L-lysyl-[protein] + acetyl-CoA = N(6)-[(R)-S(8)-acetyldihydrolipoyl]-L-lysyl-[protein] + CoA. Functionally, the pyruvate dehydrogenase complex catalyzes the overall conversion of pyruvate to acetyl-CoA and CO(2). It contains multiple copies of three enzymatic components: pyruvate dehydrogenase (E1), dihydrolipoamide acetyltransferase (E2) and lipoamide dehydrogenase (E3). In Arabidopsis thaliana (Mouse-ear cress), this protein is Dihydrolipoyllysine-residue acetyltransferase component 2 of pyruvate dehydrogenase complex, mitochondrial.